Consider the following 72-residue polypeptide: Disintegrin cereberin (72 aa).

A Disintegrin domain is found at 1 to 72; that stretch reads EAGEECDCGS…SADCPRNRFH (72 aa). Intrachain disulfides connect Cys-6/Cys-21, Cys-8/Cys-16, Cys-15/Cys-38, Cys-29/Cys-35, Cys-34/Cys-59, and Cys-47/Cys-66. Residues 51 to 53 carry the Cell attachment site motif; the sequence is RGD. Residues 51–72 are disordered; it reads RGDNPDDRCTGQSADCPRNRFH.

This sequence belongs to the venom metalloproteinase (M12B) family. P-II subfamily. P-IIa sub-subfamily. In terms of assembly, monomer (disintegrin). In terms of tissue distribution, expressed by the venom gland.

It localises to the secreted. In terms of biological role, inhibits fibrinogen interaction with platelet. Acts by binding to alpha-IIb/beta-3 (ITGA2B/ITGB3) on the platelet surface and inhibits aggregation induced by ADP, thrombin, platelet-activating factor and collagen. This Crotalus cerberus (Arizona black rattlesnake) protein is Disintegrin cereberin.